The chain runs to 525 residues: EGF domain-specific O-linked N-acetylglucosamine transferase (525 aa).

The signal sequence occupies residues 1 to 24 (MVPLRLVLLLHIIHFSCENEVGSA). Positions 293 to 295 (DYE) match the Required for optimal activity motif. An N-linked (GlcNAc...) asparagine glycan is attached at Asn352. The Prevents secretion from ER motif lies at 522–525 (RDEL).

This sequence belongs to the glycosyltransferase 61 family.

It localises to the endoplasmic reticulum lumen. It carries out the reaction L-seryl-[protein] + UDP-N-acetyl-alpha-D-glucosamine = 3-O-(N-acetyl-beta-D-glucosaminyl)-L-seryl-[protein] + UDP + H(+). It catalyses the reaction L-threonyl-[protein] + UDP-N-acetyl-alpha-D-glucosamine = 3-O-(N-acetyl-beta-D-glucosaminyl)-L-threonyl-[protein] + UDP + H(+). Functionally, catalyzes the transfer of a single N-acetylglucosamine from UDP-GlcNAc to a serine or threonine residue in extracellular proteins resulting in their modification with a beta-linked N-acetylglucosamine (O-GlcNAc). Specifically glycosylates the Thr residue located between the fifth and sixth conserved cysteines of folded EGF-like domains. The polypeptide is EGF domain-specific O-linked N-acetylglucosamine transferase (eogt) (Xenopus laevis (African clawed frog)).